Here is a 2099-residue protein sequence, read N- to C-terminus: Dedicator of cytokinesis protein 8 (2099 aa).

3 positions are modified to phosphoserine: S20, S139, and S451. The region spanning 560–729 is the C2 DOCK-type domain; that stretch reads RNLLYVYPQR…GVFNIEVQAV (170 aa). Phosphoserine occurs at positions 904, 936, 1145, and 1243. Residues 1632 to 2066 enclose the DOCKER domain; the sequence is KSYQASPDLR…LRPMIERKIP (435 aa). S2087 bears the Phosphoserine mark.

The protein belongs to the DOCK family. In terms of assembly, interacts (via DOCKER domain) with GTPase CDC42; the interaction activates CDC42 by exchanging GDP for GTP. The unphosphorylated form interacts (via DOCKER domain) with LRCH1 (via LRR repeats); the interaction prevents the association between DOCK8 and CDC42. Interacts with CCDC88B. Post-translationally, in response to chemokine CXCL12/SDF-1-alpha stimulation, phosphorylated by PRKCA/PKC-alpha which promotes DOCK8 dissociation from LRCH1. Expressed in peripheral blood mononuclear cells (PBMCs).

It localises to the cytoplasm. It is found in the cell membrane. Its subcellular location is the cell projection. The protein resides in the lamellipodium membrane. In terms of biological role, guanine nucleotide exchange factor (GEF) which specifically activates small GTPase CDC42 by exchanging bound GDP for free GTP. During immune responses, required for interstitial dendritic cell (DC) migration by locally activating CDC42 at the leading edge membrane of DC. Required for CD4(+) T-cell migration in response to chemokine stimulation by promoting CDC42 activation at T cell leading edge membrane. Is involved in NK cell cytotoxicity by controlling polarization of microtubule-organizing center (MTOC), and possibly regulating CCDC88B-mediated lytic granule transport to MTOC during cell killing. This chain is Dedicator of cytokinesis protein 8 (DOCK8), found in Homo sapiens (Human).